The chain runs to 20 residues: Fibrinogen (20 aa).

A Vitellogenin domain is found at 1-20 (LHSNLEYQYRYSGRVASGIP).

Secreted into the hemolymph.

Its subcellular location is the secreted. The protein resides in the extracellular space. Involved in lipid transport. Plays a role in hemolymph clotting. May be involved in wound healing in the cuticle. The protein is Fibrinogen of Pacifastacus leniusculus (Signal crayfish).